The following is a 158-amino-acid chain: uncharacterized protein (158 aa).

An N-terminal signal peptide occupies residues 1-16 (MFRPILILTILSCVLA). Residue N122 is glycosylated (N-linked (GlcNAc...) asparagine).

This is an uncharacterized protein from Caenorhabditis elegans.